The primary structure comprises 452 residues: 23S rRNA (uracil(1939)-C(5))-methyltransferase RlmD (452 aa).

One can recognise a TRAM domain in the interval 1 to 57; sequence METEVNVAEISALDYEGRGVTKVGGKTVFIKGALPSERVGFRIVRQKKQFDEAEAVA. Residues Cys-70, Cys-76, Cys-79, and Cys-157 each contribute to the [4Fe-4S] cluster site. Residues Gln-269, Phe-298, Asn-303, Glu-319, Asn-347, and Asp-368 each coordinate S-adenosyl-L-methionine. Residue Cys-395 is the Nucleophile of the active site.

It belongs to the class I-like SAM-binding methyltransferase superfamily. RNA M5U methyltransferase family. RlmD subfamily.

The enzyme catalyses uridine(1939) in 23S rRNA + S-adenosyl-L-methionine = 5-methyluridine(1939) in 23S rRNA + S-adenosyl-L-homocysteine + H(+). Functionally, catalyzes the formation of 5-methyl-uridine at position 1939 (m5U1939) in 23S rRNA. The sequence is that of 23S rRNA (uracil(1939)-C(5))-methyltransferase RlmD from Neisseria lactamica (strain 020-06).